The sequence spans 89 residues: Small ribosomal subunit protein uS14A (89 aa).

Residues 34 to 54 (ESLRKLPRDSNPNRLKNRDKI) are disordered.

This sequence belongs to the universal ribosomal protein uS14 family. Part of the 30S ribosomal subunit. Contacts proteins S3 and S10.

Binds 16S rRNA, required for the assembly of 30S particles and may also be responsible for determining the conformation of the 16S rRNA at the A site. The sequence is that of Small ribosomal subunit protein uS14A from Streptococcus pyogenes serotype M1.